We begin with the raw amino-acid sequence, 107 residues long: U1-lycotoxin-Ls1d (107 aa).

Positions 1 to 20 (MMKVLVVVALLVTLISYSSS) are cleaved as a signal peptide. A propeptide spanning residues 21–41 (EGIDDLEADELLSLMANEQTR) is cleaved from the precursor. Intrachain disulfides connect Cys44–Cys59, Cys51–Cys68, Cys58–Cys86, and Cys70–Cys84.

The protein belongs to the neurotoxin 19 (CSTX) family. 04 (U1-Lctx) subfamily. In terms of tissue distribution, expressed by the venom gland.

The protein resides in the secreted. The polypeptide is U1-lycotoxin-Ls1d (Lycosa singoriensis (Wolf spider)).